The primary structure comprises 800 residues: Phenylalanine--tRNA ligase beta subunit (800 aa).

The tRNA-binding domain maps to F39 to V147. One can recognise a B5 domain in the interval W401–P477. The Mg(2+) site is built by D455, D461, E464, and E465. Residues P706 to I800 enclose the FDX-ACB domain.

Belongs to the phenylalanyl-tRNA synthetase beta subunit family. Type 1 subfamily. Tetramer of two alpha and two beta subunits. Requires Mg(2+) as cofactor.

The protein localises to the cytoplasm. It catalyses the reaction tRNA(Phe) + L-phenylalanine + ATP = L-phenylalanyl-tRNA(Phe) + AMP + diphosphate + H(+). The chain is Phenylalanine--tRNA ligase beta subunit from Oleidesulfovibrio alaskensis (strain ATCC BAA-1058 / DSM 17464 / G20) (Desulfovibrio alaskensis).